The primary structure comprises 296 residues: Formamidopyrimidine-DNA glycosylase (296 aa).

Pro-2 acts as the Schiff-base intermediate with DNA in catalysis. The Proton donor role is filled by Glu-3. The Proton donor; for beta-elimination activity role is filled by Lys-58. Positions 104, 126, and 169 each coordinate DNA. Residues 260–296 form an FPG-type zinc finger; sequence SVYDRESQACRTPGCGGTVARIVQAGRSTFYCATCQK. Arg-286 acts as the Proton donor; for delta-elimination activity in catalysis.

Belongs to the FPG family. As to quaternary structure, monomer. It depends on Zn(2+) as a cofactor.

The catalysed reaction is Hydrolysis of DNA containing ring-opened 7-methylguanine residues, releasing 2,6-diamino-4-hydroxy-5-(N-methyl)formamidopyrimidine.. The enzyme catalyses 2'-deoxyribonucleotide-(2'-deoxyribose 5'-phosphate)-2'-deoxyribonucleotide-DNA = a 3'-end 2'-deoxyribonucleotide-(2,3-dehydro-2,3-deoxyribose 5'-phosphate)-DNA + a 5'-end 5'-phospho-2'-deoxyribonucleoside-DNA + H(+). Functionally, involved in base excision repair of DNA damaged by oxidation or by mutagenic agents. Acts as a DNA glycosylase that recognizes and removes damaged bases. Has a preference for oxidized purines, such as 7,8-dihydro-8-oxoguanine (8-oxoG). Has AP (apurinic/apyrimidinic) lyase activity and introduces nicks in the DNA strand. Cleaves the DNA backbone by beta-delta elimination to generate a single-strand break at the site of the removed base with both 3'- and 5'-phosphates. The protein is Formamidopyrimidine-DNA glycosylase of Rhizobium johnstonii (strain DSM 114642 / LMG 32736 / 3841) (Rhizobium leguminosarum bv. viciae).